A 322-amino-acid polypeptide reads, in one-letter code: Lipoyl synthase 2 (322 aa).

The tract at residues 1 to 36 (MKVILDLLNNDPRTTQRTERPRHPEKANRPDTPMES) is disordered. The span at 14 to 34 (TTQRTERPRHPEKANRPDTPM) shows a compositional bias: basic and acidic residues. [4Fe-4S] cluster is bound by residues C67, C72, C78, C93, C97, C100, and S306. Residues 79–295 (WAKKHATFMI…EKTAYAKGFL (217 aa)) form the Radical SAM core domain.

It belongs to the radical SAM superfamily. Lipoyl synthase family. [4Fe-4S] cluster serves as cofactor.

Its subcellular location is the cytoplasm. The catalysed reaction is [[Fe-S] cluster scaffold protein carrying a second [4Fe-4S](2+) cluster] + N(6)-octanoyl-L-lysyl-[protein] + 2 oxidized [2Fe-2S]-[ferredoxin] + 2 S-adenosyl-L-methionine + 4 H(+) = [[Fe-S] cluster scaffold protein] + N(6)-[(R)-dihydrolipoyl]-L-lysyl-[protein] + 4 Fe(3+) + 2 hydrogen sulfide + 2 5'-deoxyadenosine + 2 L-methionine + 2 reduced [2Fe-2S]-[ferredoxin]. The protein operates within protein modification; protein lipoylation via endogenous pathway; protein N(6)-(lipoyl)lysine from octanoyl-[acyl-carrier-protein]: step 2/2. Its function is as follows. Catalyzes the radical-mediated insertion of two sulfur atoms into the C-6 and C-8 positions of the octanoyl moiety bound to the lipoyl domains of lipoate-dependent enzymes, thereby converting the octanoylated domains into lipoylated derivatives. This is Lipoyl synthase 2 from Bradyrhizobium diazoefficiens (strain JCM 10833 / BCRC 13528 / IAM 13628 / NBRC 14792 / USDA 110).